We begin with the raw amino-acid sequence, 702 residues long: Translation factor GUF1 homolog, chloroplastic (702 aa).

Positions 1 to 30 (MASAAPASRGAARASTAARDAPFAAAARGP) are enriched in low complexity. A disordered region spans residues 1–41 (MASAAPASRGAARASTAARDAPFAAAARGPGRFRRDGNGRN). Residues 87–283 (SQIRNFSIIA…NIVKMIPPPP (197 aa)) enclose the tr-type G domain. GTP contacts are provided by residues 96-103 (AHIDHGKS), 162-166 (DTPGH), and 216-219 (NKID).

It belongs to the TRAFAC class translation factor GTPase superfamily. Classic translation factor GTPase family. LepA subfamily.

It localises to the plastid. The protein localises to the chloroplast. It catalyses the reaction GTP + H2O = GDP + phosphate + H(+). Promotes chloroplast protein synthesis. May act as a fidelity factor of the translation reaction, by catalyzing a one-codon backward translocation of tRNAs on improperly translocated ribosomes. In Micromonas pusilla (strain CCMP1545) (Picoplanktonic green alga), this protein is Translation factor GUF1 homolog, chloroplastic.